The chain runs to 302 residues: MIKLHEVPPEPVDPASLPHDVNAHSPEGDGNPDKRKKIFGIPYPFSRSSCRRFLWNCQKISVLPMALYFPLHAANTLITPAVSPDSAPDDVLMMVREILPSITTKLLVAGITLHVSAGVLLRIVNNWNKPRRNRHRHLKISAEQDLSQDSIGLTGGISGYLFGLYKTFRIPPQVISGYILVPVLIYHLLIMKWVPNSISTEVDFASIKQLLSSKNRWWKWLGGLVPLAILLESGVYHIGSGLCRYFGVRKMTSRKKWSTAINLLTLVGFVSLIRLMKEDSTKLGPNQFESIFKKIRLLLHVN.

The tract at residues 1–35 (MIKLHEVPPEPVDPASLPHDVNAHSPEGDGNPDKR) is disordered. Over 1–61 (MIKLHEVPPE…RFLWNCQKIS (61 aa)) the chain is Cytoplasmic. Positions 4-12 (LHEVPPEPV) match the PxP motif. Residues 62–82 (VLPMALYFPLHAANTLITPAV) form a helical membrane-spanning segment. The Mitochondrial intermembrane portion of the chain corresponds to 83-100 (SPDSAPDDVLMMVREILP). The helical transmembrane segment at 101-121 (SITTKLLVAGITLHVSAGVLL) threads the bilayer. The Cytoplasmic portion of the chain corresponds to 122–173 (RIVNNWNKPRRNRHRHLKISAEQDLSQDSIGLTGGISGYLFGLYKTFRIPPQ). The chain crosses the membrane as a helical span at residues 174-194 (VISGYILVPVLIYHLLIMKWV). At 195 to 219 (PNSISTEVDFASIKQLLSSKNRWWK) the chain is on the mitochondrial intermembrane side. A helical membrane pass occupies residues 220–240 (WLGGLVPLAILLESGVYHIGS). Over 241–258 (GLCRYFGVRKMTSRKKWS) the chain is Cytoplasmic. Residues 259–276 (TAINLLTLVGFVSLIRLM) traverse the membrane as a helical segment. The Mitochondrial intermembrane segment spans residues 277–302 (KEDSTKLGPNQFESIFKKIRLLLHVN).

As to quaternary structure, interacts (via PxP motif) with VPS13 (via SHR-BD domain).

It localises to the mitochondrion outer membrane. In terms of biological role, recruits the lipid transfer protein Vps13 to mitochondria thereby promoting vacuole-mitochondria contacts. Involved in mitochondrial lipid homeostasis. The sequence is that of Mitochondrial adapter protein MCP1 from Saccharomyces cerevisiae (strain ATCC 204508 / S288c) (Baker's yeast).